The following is a 255-amino-acid chain: Hemin import ATP-binding protein HmuV (255 aa).

Residues 2 to 238 (LRAHNLHIRR…ESLKAVFGLE (237 aa)) form the ABC transporter domain. 34 to 41 (GPNGAGKS) is a binding site for ATP.

Belongs to the ABC transporter superfamily. Heme (hemin) importer (TC 3.A.1.14.5) family. In terms of assembly, the complex is composed of two ATP-binding proteins (HmuV), two transmembrane proteins (HmuU) and a solute-binding protein (HmuT).

The protein resides in the cell inner membrane. Functionally, part of the ABC transporter complex HmuTUV involved in hemin import. Responsible for energy coupling to the transport system. This Pseudomonas fluorescens (strain Pf0-1) protein is Hemin import ATP-binding protein HmuV.